The chain runs to 488 residues: Regulatory protein ViaA (488 aa).

Belongs to the ViaA family. In terms of assembly, homodimer. Interacts with RavA.

The protein localises to the cytoplasm. Component of the RavA-ViaA chaperone complex, which may act on the membrane to optimize the function of some of the respiratory chains. ViaA stimulates the ATPase activity of RavA. In Yersinia pseudotuberculosis serotype O:1b (strain IP 31758), this protein is Regulatory protein ViaA.